We begin with the raw amino-acid sequence, 163 residues long: MRRLYLFVLILATFLTTSHGIVDASQDFQHLRRGLQEEAGEDEERIKLSGFKLPKSFGKRFKQKLSTKTKAFATRAASRMFQKKKGPLYGKYYKNAGKPKRQTPQIAATGPAKPKVQSPEEAAAVPGPYGQSLEYRVAQKVPLREREAFNPAKLSKINEMIPV.

The first 20 residues, 1–20 (MRRLYLFVLILATFLTTSHG), serve as a signal peptide directing secretion. Residues 33-45 (RGLQEEAGEDEER) carry the RxLR-dEER motif. The segment at 94-127 (KNAGKPKRQTPQIAATGPAKPKVQSPEEAAAVPG) is disordered.

Belongs to the RxLR effector family.

The protein localises to the secreted. It is found in the host nucleus. Its subcellular location is the host cytoplasm. Its function is as follows. Secreted effector that completely suppresses the host cell death induced by cell death-inducing proteins. This is Secreted RxLR effector protein 135 from Plasmopara viticola (Downy mildew of grapevine).